Reading from the N-terminus, the 577-residue chain is Arginine--tRNA ligase (577 aa).

The short motif at 122–132 is the 'HIGH' region element; sequence PNVAKEMHVGH.

This sequence belongs to the class-I aminoacyl-tRNA synthetase family. In terms of assembly, monomer.

It is found in the cytoplasm. The enzyme catalyses tRNA(Arg) + L-arginine + ATP = L-arginyl-tRNA(Arg) + AMP + diphosphate. In Vibrio vulnificus (strain CMCP6), this protein is Arginine--tRNA ligase.